Consider the following 710-residue polypeptide: Solute carrier organic anion transporter family member 3A1 (710 aa).

M1 is modified (N-acetylmethionine). Over residues 1–15 (MQGKKPGGSSGGGRS) the composition is skewed to gly residues. Residues 1–25 (MQGKKPGGSSGGGRSGELQGDEAQR) form a disordered region. Residues 1–40 (MQGKKPGGSSGGGRSGELQGDEAQRNKKKKKKVSCFSNIK) lie on the Cytoplasmic side of the membrane. The helical transmembrane segment at 41–60 (IFLVSECALMLAQGTVGAYL) threads the bilayer. Topologically, residues 61-79 (VSVLTTLERRFNLQSADVG) are extracellular. A helical transmembrane segment spans residues 80-100 (VIASSFEIGNLALILFVSYFG). Over 101 to 106 (ARGHRP) the chain is Cytoplasmic. A helical transmembrane segment spans residues 107 to 131 (RLIGCGGIVMALGALLSALPEFLTH). The Extracellular portion of the chain corresponds to 132–174 (QYKYEAGEIRWGAEGRDVCATNGSSSDEGPDPDLICRNRTATN). Residues N153 and N169 are each glycosylated (N-linked (GlcNAc...) asparagine). Residues 175-203 (MMYLLLIGAQVLLGIGATPVQPLGVSYID) form a helical membrane-spanning segment. Residues 204-222 (DHVRRKDSSLYIGILFTML) are Cytoplasmic-facing. The chain crosses the membrane as a helical span at residues 223–243 (VFGPACGFILGSFCTKIYVDA). Over 244-261 (VFIDTSNLDITPDDPRWI) the chain is Extracellular. Residues 262–286 (GAWWGGFLLCGALLFFSSLLMFGFP) form a helical membrane-spanning segment. Residues 287 to 344 (QSLPPHSDPGMESEQAMLPEREYERPKPSNGVLRHPLEPDSSASCFQQLRVIPKVTKH) are Cytoplasmic-facing. The chain crosses the membrane as a helical span at residues 345 to 366 (LLSNPVFTCIVLAACMEIAVVA). Residues 367-386 (GFAAFLGKYLEQQFNLTTSS) lie on the Extracellular side of the membrane. An N-linked (GlcNAc...) asparagine glycan is attached at N381. The helical transmembrane segment at 387 to 410 (ANQLLGMTAIPCACLGIFLGGLLV) threads the bilayer. The Cytoplasmic segment spans residues 411-414 (KKLS). The chain crosses the membrane as a helical span at residues 415-438 (LSALGAIRMAMLVNLVSTACYVSF). Residues 439–539 (LFLGCDTGPV…PGCQEAFLTF (101 aa)) lie on the Extracellular side of the membrane. The N-linked (GlcNAc...) asparagine glycan is linked to N457. The region spanning 465 to 513 (LDPYSPCNNNCECQTDSFTPVCGADGITYLSACFAGCNSTNLTGCACLT) is the Kazal-like domain. Intrachain disulfides connect C471-C497, C475-C486, and C477-C501. N-linked (GlcNAc...) asparagine glycans are attached at residues N502, N505, and N519. Residues 540-562 (LCVMCVCSLIGAMAQTPSVIILI) form a helical membrane-spanning segment. Topologically, residues 563–571 (RTVSPELKS) are cytoplasmic. The chain crosses the membrane as a helical span at residues 572–597 (YALGVLFLLLRLLGFIPPPLIFGAGI). At 598–630 (DSTCLFWSTFCGEQGACVLYDNVVYRYLYVSIA) the chain is on the extracellular side. A helical membrane pass occupies residues 631–648 (IALKSFAFILYTTTWQCL). The Cytoplasmic portion of the chain corresponds to 649–705 (RKNYKRYIKNHEGGLSTSEFFASTLTLDNLGRDPVPAHQTHRTKFIYNLEDHEWCEN).

This sequence belongs to the organo anion transporter (TC 2.A.60) family. Widely expressed.

Its subcellular location is the basolateral cell membrane. The protein localises to the apical cell membrane. It is found in the basal cell membrane. It carries out the reaction L-thyroxine(out) = L-thyroxine(in). The enzyme catalyses prostaglandin E1(out) = prostaglandin E1(in). The catalysed reaction is prostaglandin E2(out) = prostaglandin E2(in). It catalyses the reaction prostaglandin F2alpha(out) = prostaglandin F2alpha(in). It carries out the reaction (5Z,8Z,11Z,14Z)-eicosatetraenoate(out) = (5Z,8Z,11Z,14Z)-eicosatetraenoate(in). The enzyme catalyses taurocholate(out) = taurocholate(in). The catalysed reaction is glycocholate(out) = glycocholate(in). It catalyses the reaction estrone 3-sulfate(out) = estrone 3-sulfate(in). It carries out the reaction argipressin(out) = argipressin(in). Its function is as follows. Putative organic anion antiporter with apparent broad substrate specificity. Recognizes various substrates including thyroid hormone L-thyroxine, prostanoids such as prostaglandin E1 and E2, bile acids such as taurocholate, glycolate and glycochenodeoxycholate and peptide hormones such as L-arginine vasopressin, likely operating in a tissue-specific manner. The transport mechanism, its electrogenicity and potential tissue-specific counterions remain to be elucidated. The polypeptide is Solute carrier organic anion transporter family member 3A1 (Slco3a1) (Mus musculus (Mouse)).